Reading from the N-terminus, the 789-residue chain is Spermatogenesis-associated protein 20 (789 aa).

Residues 1-19 (MSHHSPPPPKHKGEHKGHG) show a composition bias toward basic residues. Residues 1-65 (MSHHSPPPPK…CPPPAPQKTA (65 aa)) are disordered. Phosphoserine is present on residues S5 and S652.

In terms of tissue distribution, testis-specific and age-dependent (at protein level). Highly expressed. Expressed in round spermatids located in the inner half-layer of the seminiferous epithelium as well as in early elongated spermatids having cytoplasmic protrusions into the tubular lumen.

The protein resides in the secreted. May play a role in fertility regulation. The sequence is that of Spermatogenesis-associated protein 20 (Spata20) from Rattus norvegicus (Rat).